The primary structure comprises 1309 residues: Tetratricopeptide repeat protein 41 (1309 aa).

TPR repeat units follow at residues 399–432 (PQLE…KPCI), 651–684 (WIQE…SVRE), 817–851 (LTFL…SVQS), 859–892 (LKAQ…LLRF), 989–1024 (MSYF…KEKA), and 1042–1079 (SDTL…RAAH).

It is found in the cytoplasm. This chain is Tetratricopeptide repeat protein 41, found in Rattus norvegicus (Rat).